The sequence spans 485 residues: Glutamyl-tRNA(Gln) amidotransferase subunit A (485 aa).

Active-site charge relay system residues include Lys-79 and Ser-154. The active-site Acyl-ester intermediate is Ser-178.

The protein belongs to the amidase family. GatA subfamily. As to quaternary structure, heterotrimer of A, B and C subunits.

It catalyses the reaction L-glutamyl-tRNA(Gln) + L-glutamine + ATP + H2O = L-glutaminyl-tRNA(Gln) + L-glutamate + ADP + phosphate + H(+). Functionally, allows the formation of correctly charged Gln-tRNA(Gln) through the transamidation of misacylated Glu-tRNA(Gln) in organisms which lack glutaminyl-tRNA synthetase. The reaction takes place in the presence of glutamine and ATP through an activated gamma-phospho-Glu-tRNA(Gln). This Clostridium botulinum (strain Kyoto / Type A2) protein is Glutamyl-tRNA(Gln) amidotransferase subunit A.